Consider the following 362-residue polypeptide: Peptide chain release factor 1 (362 aa).

Residue glutamine 237 is modified to N5-methylglutamine. Positions 279–305 (RLQQAEDEKRRSEEESSRRNLVASGDR) are disordered. The segment covering 282–296 (QAEDEKRRSEEESSR) has biased composition (basic and acidic residues).

This sequence belongs to the prokaryotic/mitochondrial release factor family. Post-translationally, methylated by PrmC. Methylation increases the termination efficiency of RF1.

Its subcellular location is the cytoplasm. Peptide chain release factor 1 directs the termination of translation in response to the peptide chain termination codons UAG and UAA. The polypeptide is Peptide chain release factor 1 (Colwellia psychrerythraea (strain 34H / ATCC BAA-681) (Vibrio psychroerythus)).